The primary structure comprises 100 residues: Integration host factor subunit alpha (100 aa).

The disordered stretch occupies residues 53 to 72 (FDLRDKRQRPGRNPKTGEEI).

It belongs to the bacterial histone-like protein family. In terms of assembly, heterodimer of an alpha and a beta chain.

Functionally, this protein is one of the two subunits of integration host factor, a specific DNA-binding protein that functions in genetic recombination as well as in transcriptional and translational control. This chain is Integration host factor subunit alpha, found in Stutzerimonas stutzeri (strain A1501) (Pseudomonas stutzeri).